Consider the following 315-residue polypeptide: Cytochrome c biogenesis protein CcsA (315 aa).

8 helical membrane-spanning segments follow: residues serine 15–glycine 35, phenylalanine 39–isoleucine 59, leucine 73–valine 93, threonine 97–phenylalanine 117, valine 144–valine 164, threonine 222–asparagine 242, tryptophan 257–tryptophan 277, and alanine 283–leucine 303.

Belongs to the CcmF/CycK/Ccl1/NrfE/CcsA family. In terms of assembly, may interact with Ccs1.

It is found in the plastid. The protein localises to the chloroplast thylakoid membrane. In terms of biological role, required during biogenesis of c-type cytochromes (cytochrome c6 and cytochrome f) at the step of heme attachment. This chain is Cytochrome c biogenesis protein CcsA, found in Chlorella vulgaris (Green alga).